The primary structure comprises 873 residues: Protein translocase subunit SecA (873 aa).

ATP-binding positions include Gln88, 106 to 110 (GEGKT), and Asp501. Positions 856, 858, 867, and 868 each coordinate Zn(2+).

Belongs to the SecA family. In terms of assembly, monomer and homodimer. Part of the essential Sec protein translocation apparatus which comprises SecA, SecYEG and auxiliary proteins SecDF-YajC and YidC. Zn(2+) serves as cofactor.

The protein localises to the cell inner membrane. It localises to the cytoplasm. It catalyses the reaction ATP + H2O + cellular proteinSide 1 = ADP + phosphate + cellular proteinSide 2.. Functionally, part of the Sec protein translocase complex. Interacts with the SecYEG preprotein conducting channel. Has a central role in coupling the hydrolysis of ATP to the transfer of proteins into and across the cell membrane, serving both as a receptor for the preprotein-SecB complex and as an ATP-driven molecular motor driving the stepwise translocation of polypeptide chains across the membrane. This chain is Protein translocase subunit SecA, found in Anaplasma phagocytophilum (strain HZ).